The primary structure comprises 354 residues: Glyceraldehyde-3-phosphate dehydrogenase (354 aa).

NAD(+)-binding positions include 11 to 12 and G108; that span reads TI. 137 to 139 lines the D-glyceraldehyde 3-phosphate pocket; the sequence is SCN. C138 serves as the catalytic Nucleophile. R166 serves as a coordination point for NAD(+). 192–193 contacts D-glyceraldehyde 3-phosphate; it reads HG. Residue Q299 participates in NAD(+) binding.

The protein belongs to the glyceraldehyde-3-phosphate dehydrogenase family. Homotetramer.

It is found in the cytoplasm. It catalyses the reaction D-glyceraldehyde 3-phosphate + phosphate + NADP(+) = (2R)-3-phospho-glyceroyl phosphate + NADPH + H(+). The enzyme catalyses D-glyceraldehyde 3-phosphate + phosphate + NAD(+) = (2R)-3-phospho-glyceroyl phosphate + NADH + H(+). It functions in the pathway carbohydrate degradation; glycolysis; pyruvate from D-glyceraldehyde 3-phosphate: step 1/5. This Haloarcula marismortui (strain ATCC 43049 / DSM 3752 / JCM 8966 / VKM B-1809) (Halobacterium marismortui) protein is Glyceraldehyde-3-phosphate dehydrogenase.